Reading from the N-terminus, the 201-residue chain is Small ribosomal subunit protein uS4 (201 aa).

One can recognise an S4 RNA-binding domain in the interval 91–155 (TRLDNVVYRA…STLPFQVARE (65 aa)).

Belongs to the universal ribosomal protein uS4 family. Part of the 30S ribosomal subunit. Contacts protein S5. The interaction surface between S4 and S5 is involved in control of translational fidelity.

One of the primary rRNA binding proteins, it binds directly to 16S rRNA where it nucleates assembly of the body of the 30S subunit. Its function is as follows. With S5 and S12 plays an important role in translational accuracy. The sequence is that of Small ribosomal subunit protein uS4 from Nocardia farcinica (strain IFM 10152).